The primary structure comprises 292 residues: Elongation factor Ts (292 aa).

Residues 80 to 83 (TDFV) are involved in Mg(2+) ion dislocation from EF-Tu.

This sequence belongs to the EF-Ts family.

The protein localises to the cytoplasm. In terms of biological role, associates with the EF-Tu.GDP complex and induces the exchange of GDP to GTP. It remains bound to the aminoacyl-tRNA.EF-Tu.GTP complex up to the GTP hydrolysis stage on the ribosome. The sequence is that of Elongation factor Ts from Psychrobacter sp. (strain PRwf-1).